The chain runs to 459 residues: Serine carboxypeptidase-like 27 (459 aa).

An N-terminal signal peptide occupies residues 1-20 (MDYSFLLIILLLTISTSCCA). 3 disulfide bridges follow: Cys-91–Cys-344, Cys-252–Cys-264, and Cys-288–Cys-312. Asn-142 carries N-linked (GlcNAc...) asparagine glycosylation. Ser-184 is a catalytic residue. Residues Asn-289 and Asn-333 are each glycosylated (N-linked (GlcNAc...) asparagine). Active-site residues include Asp-381 and His-433.

The protein belongs to the peptidase S10 family. In terms of tissue distribution, ubiquitous.

It is found in the secreted. Its function is as follows. Probable carboxypeptidase. The protein is Serine carboxypeptidase-like 27 (SCPL27) of Arabidopsis thaliana (Mouse-ear cress).